The following is a 311-amino-acid chain: tRNA-cytidine(32) 2-sulfurtransferase (311 aa).

The PP-loop motif motif lies at 47 to 52 (SGGKDS). Cysteine 122, cysteine 125, and cysteine 213 together coordinate [4Fe-4S] cluster.

It belongs to the TtcA family. In terms of assembly, homodimer. Mg(2+) is required as a cofactor. It depends on [4Fe-4S] cluster as a cofactor.

It localises to the cytoplasm. It carries out the reaction cytidine(32) in tRNA + S-sulfanyl-L-cysteinyl-[cysteine desulfurase] + AH2 + ATP = 2-thiocytidine(32) in tRNA + L-cysteinyl-[cysteine desulfurase] + A + AMP + diphosphate + H(+). The protein operates within tRNA modification. Its function is as follows. Catalyzes the ATP-dependent 2-thiolation of cytidine in position 32 of tRNA, to form 2-thiocytidine (s(2)C32). The sulfur atoms are provided by the cysteine/cysteine desulfurase (IscS) system. In Escherichia coli O139:H28 (strain E24377A / ETEC), this protein is tRNA-cytidine(32) 2-sulfurtransferase.